A 550-amino-acid polypeptide reads, in one-letter code: Glucagon-like peptide 2 receptor (550 aa).

Residues methionine 1–alanine 173 are Extracellular-facing. 3 cysteine pairs are disulfide-bonded: cysteine 83/cysteine 105, cysteine 96/cysteine 137, and cysteine 118/cysteine 159. N-linked (GlcNAc...) asparagine glycosylation is found at asparagine 97, asparagine 113, asparagine 148, and asparagine 162. Residues leucine 174–threonine 198 traverse the membrane as a helical segment. Over leucine 199–arginine 210 the chain is Cytoplasmic. A helical membrane pass occupies residues asparagine 211–serine 235. Residues histidine 236–arginine 261 lie on the Extracellular side of the membrane. A helical membrane pass occupies residues serine 262–leucine 285. The Cytoplasmic segment spans residues histidine 286–leucine 299. A helical transmembrane segment spans residues tryptophan 300–alanine 321. Residues arginine 322–isoleucine 339 lie on the Extracellular side of the membrane. The chain crosses the membrane as a helical span at residues tryptophan 340–leucine 362. Residues lysine 363–serine 386 lie on the Cytoplasmic side of the membrane. A helical transmembrane segment spans residues threonine 387–proline 405. The Extracellular segment spans residues aspartate 406 to arginine 417. A helical membrane pass occupies residues leucine 418–phenylalanine 438. Over alanine 439–isoleucine 550 the chain is Cytoplasmic.

The protein belongs to the G-protein coupled receptor 2 family.

Its subcellular location is the cell membrane. Its function is as follows. This is a receptor for glucagon-like peptide 2. The activity of this receptor is mediated by G proteins which activate adenylyl cyclase. In Rattus norvegicus (Rat), this protein is Glucagon-like peptide 2 receptor (Glp2r).